The primary structure comprises 162 residues: ATP synthase subunit b (162 aa).

A helical membrane pass occupies residues 6 to 26 (PDIGLLFWMLLSFGIVFFVAA).

Belongs to the ATPase B chain family. As to quaternary structure, F-type ATPases have 2 components, F(1) - the catalytic core - and F(0) - the membrane proton channel. F(1) has five subunits: alpha(3), beta(3), gamma(1), delta(1), epsilon(1). F(0) has three main subunits: a(1), b(2) and c(10-14). The alpha and beta chains form an alternating ring which encloses part of the gamma chain. F(1) is attached to F(0) by a central stalk formed by the gamma and epsilon chains, while a peripheral stalk is formed by the delta and b chains.

Its subcellular location is the cell inner membrane. F(1)F(0) ATP synthase produces ATP from ADP in the presence of a proton or sodium gradient. F-type ATPases consist of two structural domains, F(1) containing the extramembraneous catalytic core and F(0) containing the membrane proton channel, linked together by a central stalk and a peripheral stalk. During catalysis, ATP synthesis in the catalytic domain of F(1) is coupled via a rotary mechanism of the central stalk subunits to proton translocation. Its function is as follows. Component of the F(0) channel, it forms part of the peripheral stalk, linking F(1) to F(0). The sequence is that of ATP synthase subunit b from Azobacteroides pseudotrichonymphae genomovar. CFP2.